The following is a 205-amino-acid chain: Large ribosomal subunit protein uL4 (205 aa).

The tract at residues 65-99 is disordered; it reads RQKGTGGARHGSRKSPTFRHGGVYKGPTPRSHGHD.

It belongs to the universal ribosomal protein uL4 family. As to quaternary structure, part of the 50S ribosomal subunit.

One of the primary rRNA binding proteins, this protein initially binds near the 5'-end of the 23S rRNA. It is important during the early stages of 50S assembly. It makes multiple contacts with different domains of the 23S rRNA in the assembled 50S subunit and ribosome. Functionally, forms part of the polypeptide exit tunnel. The protein is Large ribosomal subunit protein uL4 of Ruegeria pomeroyi (strain ATCC 700808 / DSM 15171 / DSS-3) (Silicibacter pomeroyi).